The following is a 192-amino-acid chain: Fe/S biogenesis protein NfuA (192 aa).

Positions 149 and 152 each coordinate [4Fe-4S] cluster.

Belongs to the NfuA family. In terms of assembly, homodimer. It depends on [4Fe-4S] cluster as a cofactor.

Its function is as follows. Involved in iron-sulfur cluster biogenesis. Binds a 4Fe-4S cluster, can transfer this cluster to apoproteins, and thereby intervenes in the maturation of Fe/S proteins. Could also act as a scaffold/chaperone for damaged Fe/S proteins. In Aeromonas salmonicida (strain A449), this protein is Fe/S biogenesis protein NfuA.